A 282-amino-acid polypeptide reads, in one-letter code: MAKGLGKGINALFNQVDLSEETVEEIKIADLRPNPYQPRKHFDDEALAELKESVLQHGILQPLIVRKSLKGYDIVAGERRFRAAKLAGLDTVPAIVRELSEALMREIALLENLQREDLSPLEEAQAYDSLLKHLDLTQEQLAKRLGKSRPHIANHLRLLTLPENIQQLIAEGTLSMGHGRTLLGLKNKNKLEPLVQKVIAEQLNVRQLEQLIQQLNQNVPRETKKKEPVKDAVLKERESYLQNYFGTTVNIKRQKKKGKIEIEFFSNEDLDRILELLSERES.

A DNA-binding region (H-T-H motif) is located at residues 139–158; it reads EQLAKRLGKSRPHIANHLRL.

It belongs to the ParB family.

Its subcellular location is the cytoplasm. The protein resides in the nucleoid. Functionally, required for the initiation of sporulation and for normal chromosome segregation. Antagonizes sporulation inhibition by Soj. It probably interacts with a specific DNA site and other proteins involved in partitioning and cell division, and antagonizes Soj in response to cell cycle events related to chromosome partitioning. The sequence is that of Stage 0 sporulation protein J from Bacillus subtilis (strain 168).